The following is a 493-amino-acid chain: UDP-N-acetylmuramoyl-L-alanyl-D-glutamate--2,6-diaminopimelate ligase (493 aa).

Residues Leu30 and Ser32 each coordinate UDP-N-acetyl-alpha-D-muramoyl-L-alanyl-D-glutamate. ATP is bound at residue 117–123; the sequence is GTNGKTT. UDP-N-acetyl-alpha-D-muramoyl-L-alanyl-D-glutamate-binding positions include Asn158, 159-160, Ser186, Gln192, and Arg194; that span reads TT. N6-carboxylysine is present on Lys226. Meso-2,6-diaminopimelate is bound by residues Arg388, 412–415, Gly463, and Glu467; that span reads DNPR. Residues 412 to 415 carry the Meso-diaminopimelate recognition motif motif; that stretch reads DNPR.

Belongs to the MurCDEF family. MurE subfamily. Mg(2+) serves as cofactor. In terms of processing, carboxylation is probably crucial for Mg(2+) binding and, consequently, for the gamma-phosphate positioning of ATP.

It localises to the cytoplasm. It carries out the reaction UDP-N-acetyl-alpha-D-muramoyl-L-alanyl-D-glutamate + meso-2,6-diaminopimelate + ATP = UDP-N-acetyl-alpha-D-muramoyl-L-alanyl-gamma-D-glutamyl-meso-2,6-diaminopimelate + ADP + phosphate + H(+). Its pathway is cell wall biogenesis; peptidoglycan biosynthesis. Catalyzes the addition of meso-diaminopimelic acid to the nucleotide precursor UDP-N-acetylmuramoyl-L-alanyl-D-glutamate (UMAG) in the biosynthesis of bacterial cell-wall peptidoglycan. This Vibrio vulnificus (strain YJ016) protein is UDP-N-acetylmuramoyl-L-alanyl-D-glutamate--2,6-diaminopimelate ligase.